A 343-amino-acid polypeptide reads, in one-letter code: General transcription and DNA repair factor IIH subunit TFB6 (343 aa).

A Phosphotyrosine modification is found at Y69. 2 positions are modified to phosphothreonine: T71 and T84. S104, S105, S108, and S342 each carry phosphoserine.

As to quaternary structure, component of the general transcription factor TFIIH, composed of a 7-subunit TFIIH core complex composed of XPB/SSL2, XPD/RAD3, SSL1, TFB1, TFB2, TFB4 and TFB5 which is active in NER; the 3-subunit CTD-kinase module TFIIK composed of CCL1, KIN28, and TFB3 which is active in transcription; as well as TFB6 that regulates SSL2 association with the complex. Post-translationally, phosphorylation leads the dissociation of from SSL2.

It localises to the cytoplasm. The protein localises to the nucleus. Functionally, component of the general transcription and DNA repair factor IIH (TFIIH) core complex, which is involved in general and transcription-coupled nucleotide excision repair (NER) of damaged DNA and, when complexed to TFIIK, in RNA transcription by RNA polymerase II. In NER, TFIIH acts by opening DNA around the lesion to allow the excision of the damaged oligonucleotide and its replacement by a new DNA fragment. In transcription, TFIIH has an essential role in transcription initiation. When the pre-initiation complex (PIC) has been established, TFIIH is required for promoter opening and promoter escape. Phosphorylation of the C-terminal tail (CTD) of the largest subunit of RNA polymerase II by the kinase module TFIIK controls the initiation of transcription. TFB6 facilitates dissociation of the SSL2 helicase from TFIIH after transcription initiation. This chain is General transcription and DNA repair factor IIH subunit TFB6, found in Saccharomyces cerevisiae (strain ATCC 204508 / S288c) (Baker's yeast).